Here is a 662-residue protein sequence, read N- to C-terminus: Interferon-induced GTP-binding protein Mx1 (662 aa).

An N-acetylmethionine; in Interferon-induced GTP-binding protein Mx1; alternate modification is found at Met-1. The 274-residue stretch at Asp-67 to Pro-340 folds into the Dynamin-type G domain. Residues Gly-77 to Ser-84 form a G1 motif region. Residue Gly-77–Ser-84 coordinates GTP. The segment at Val-102–Arg-104 is G2 motif. Residues Asp-178–Gly-181 form a G3 motif region. GTP contacts are provided by residues Asp-178–Ile-182 and Thr-247–Asp-250. The G4 motif stretch occupies residues Thr-247–Asp-250. Residues Lys-279 to Gly-282 are G5 motif. The interval Leu-341–Glu-366 is bundle signaling element (BSE). The segment at Glu-366–Cys-533 is middle domain. Positions Asp-367 to Glu-632 are stalk. The tract at residues Lys-554–Lys-557 is critical for lipid-binding. Residues Met-574–Gly-662 enclose the GED domain.

It belongs to the TRAFAC class dynamin-like GTPase superfamily. Dynamin/Fzo/YdjA family. In terms of assembly, homotetramer. Oligomerizes into multimeric filamentous or ring-like structures by virtue of its stalk domain. Oligomerization is critical for GTPase activity, protein stability, and recognition of viral target structures. Interacts with TRPC1, TRPC3, TRPC4, TRPC5, TRPC6 and TRPC7. Interacts with HSPA5. Interacts with DDX39A and DDX39B. Interacts with TUBB/TUBB5. The GTP-bound form interacts (via C-terminus) with THOV P5 protein. The GTP-bound form interacts with LACV protein N. Interacts with CCHFV protein N. In terms of processing, ISGylated.

It is found in the cytoplasm. The protein localises to the endoplasmic reticulum membrane. Its subcellular location is the perinuclear region. It localises to the nucleus. In terms of biological role, interferon-induced dynamin-like GTPase with antiviral activity against a wide range of RNA viruses and some DNA viruses. Its target viruses include negative-stranded RNA viruses and HBV through binding and inactivation of their ribonucleocapsid. May also antagonize reoviridae and asfarviridae replication. Inhibits thogoto virus (THOV) replication by preventing the nuclear import of viral nucleocapsids. Inhibits La Crosse virus (LACV) replication by sequestering viral nucleoprotein in perinuclear complexes, preventing genome amplification, budding, and egress. Inhibits influenza A virus (IAV) replication by decreasing or delaying NP synthesis and by blocking endocytic traffic of incoming virus particles. Enhances ER stress-mediated cell death after influenza virus infection. May regulate the calcium channel activity of TRPCs. This is Interferon-induced GTP-binding protein Mx1 (MX1) from Homo sapiens (Human).